Consider the following 425-residue polypeptide: Nuclear pore complex-interacting protein family member B6 (425 aa).

The segment at 332–414 (SPLPPSVDDN…RRLSKLRTRH (83 aa)) is disordered. The span at 353–395 (EVEKPPKPKRWRVDEVEQSPKPKRRRVDEVEQSPKPKRQREAE) shows a compositional bias: basic and acidic residues. Basic residues predominate over residues 401–414 (KPKRRRLSKLRTRH).

This sequence belongs to the NPIP family.

In Homo sapiens (Human), this protein is Nuclear pore complex-interacting protein family member B6 (NPIPB6).